A 606-amino-acid chain; its full sequence is NADH-ubiquinone oxidoreductase chain 5 (606 aa).

The next 16 membrane-spanning stretches (helical) occupy residues M1 to V21, Y35 to L55, L87 to Y107, I114 to A134, L140 to G160, A171 to S191, F211 to L233, T241 to V261, L272 to A292, I301 to N320, A325 to I347, L366 to L386, L413 to G433, L457 to T477, M482 to F502, and G582 to F602.

This sequence belongs to the complex I subunit 5 family. In terms of assembly, core subunit of respiratory chain NADH dehydrogenase (Complex I) which is composed of 45 different subunits.

It is found in the mitochondrion inner membrane. The enzyme catalyses a ubiquinone + NADH + 5 H(+)(in) = a ubiquinol + NAD(+) + 4 H(+)(out). Its function is as follows. Core subunit of the mitochondrial membrane respiratory chain NADH dehydrogenase (Complex I) which catalyzes electron transfer from NADH through the respiratory chain, using ubiquinone as an electron acceptor. Essential for the catalytic activity and assembly of complex I. The polypeptide is NADH-ubiquinone oxidoreductase chain 5 (MT-ND5) (Balaenoptera musculus (Blue whale)).